We begin with the raw amino-acid sequence, 487 residues long: Betaine aldehyde dehydrogenase (487 aa).

The K(+) site is built by isoleucine 27 and aspartate 93. NAD(+) is bound at residue 149 to 151 (GAW). Catalysis depends on lysine 161, which acts as the Charge relay system. NAD(+) contacts are provided by residues 175–178 (KPSE) and 228–231 (SVPT). K(+) is bound at residue leucine 243. Glutamate 249 serves as the catalytic Proton acceptor. Residues glycine 251, cysteine 283, and glutamate 384 each contribute to the NAD(+) site. Cysteine 283 serves as the catalytic Nucleophile. Residue cysteine 283 is modified to Cysteine sulfenic acid (-SOH). The K(+) site is built by lysine 454 and glycine 457. The active-site Charge relay system is the glutamate 461.

The protein belongs to the aldehyde dehydrogenase family. Dimer of dimers. K(+) serves as cofactor.

The enzyme catalyses betaine aldehyde + NAD(+) + H2O = glycine betaine + NADH + 2 H(+). It participates in amine and polyamine biosynthesis; betaine biosynthesis via choline pathway; betaine from betaine aldehyde: step 1/1. Involved in the biosynthesis of the osmoprotectant glycine betaine. Catalyzes the irreversible oxidation of betaine aldehyde to the corresponding acid. The protein is Betaine aldehyde dehydrogenase of Brucella melitensis biotype 2 (strain ATCC 23457).